Consider the following 689-residue polypeptide: MSKHTVLFELGCEELPPKSLKTLRDALQAETVKGLNEAGLDFASVEAYAAPRRLALKIVDVDAAQADTQKRFDGPAVQAAYDAEGKPTKALEGFMRGQGITVDQLSTFQAGKVEKVCYLKDVKGQSLDALLPQILQTALDNLPIAKRMRSAASRTEFVRPVKWVVLLKDDQVIEATIQDHKAGNVTYGHRFHAPEAVTLAHANDYLAALEKAYVVANFEKRQATIQEQVKKLADEVNATAIVPADLLDEVTSLVEWPVALRATFEERYLAVPQEALITTMQDNQKYFCLINAEGKLQPYFITVSNIESKDSTQIIEGNEKVVRPRLSDAEFFFLQDQKQPLASRKEKLANMVFQAQLGTLWDKSTRIAKLAVALSSITGANPADAEKAALLAKCDLTSELVGEFPELQGIAGTYYARIEGENTEVSEALGEQYLPKFAGDVLPKTKTGTTIALADRLDTLVGIFGIGQAPTGSKDPFALRRSAIGILRLIIENELDVTIEELVNLALQGYGDIVKDHDKTRADAVAFLEGRYRAKYEDQGVAVDVLQAVQALAPKSPLDFDKRVNAVNHFRTLPEAAALAAANKRVANILAKEAAPEGSVIEANLVEDAEKALFAELQAVTPVVEPLLAAKDYTAALSKLAALRAPIDAFFDGVMVMADDADLKANRLRLLAQLRNLFTAVADVSVLQG.

It belongs to the class-II aminoacyl-tRNA synthetase family. In terms of assembly, tetramer of two alpha and two beta subunits.

Its subcellular location is the cytoplasm. The enzyme catalyses tRNA(Gly) + glycine + ATP = glycyl-tRNA(Gly) + AMP + diphosphate. This Acinetobacter baumannii (strain ATCC 17978 / DSM 105126 / CIP 53.77 / LMG 1025 / NCDC KC755 / 5377) protein is Glycine--tRNA ligase beta subunit.